The following is a 219-amino-acid chain: NADH-quinone oxidoreductase subunit C (219 aa).

The protein belongs to the complex I 30 kDa subunit family. As to quaternary structure, NDH-1 is composed of 14 different subunits. Subunits NuoB, C, D, E, F, and G constitute the peripheral sector of the complex.

The protein resides in the cell inner membrane. The enzyme catalyses a quinone + NADH + 5 H(+)(in) = a quinol + NAD(+) + 4 H(+)(out). NDH-1 shuttles electrons from NADH, via FMN and iron-sulfur (Fe-S) centers, to quinones in the respiratory chain. The immediate electron acceptor for the enzyme in this species is believed to be ubiquinone. Couples the redox reaction to proton translocation (for every two electrons transferred, four hydrogen ions are translocated across the cytoplasmic membrane), and thus conserves the redox energy in a proton gradient. The chain is NADH-quinone oxidoreductase subunit C from Methylorubrum populi (strain ATCC BAA-705 / NCIMB 13946 / BJ001) (Methylobacterium populi).